Consider the following 397-residue polypeptide: MNYAYPDEKGHYGIYGGRYVPETLMQSVLELEEAYKEAMEDEAFQKELNHYLKTYVGRETPLYFAENMTEYCGGAKIYLKREDLNHTGAHKINNTIGQALLAVRMGKKKVVAETGAGQHGVATATVCALLGLECVIFMGEEDVRRQKLNVFRMELLGAKVESVAAGSGTLKDAVNEALRYWVSHVHDTHYIMGSVLGPHPFPQIVRDFQSVIGKETKKQYEALEGKLPEAVVACIGGGSNAMGMFYPFVHDEEVALYGVEAAGKGVHTEKHAATLTKGSVGVLHGSMMYLLQNEEGQIQEAHSISAGLDYPGVGPEHSLLKDIGRVSYHSITDDEALEAFQLLTKKEGIIPALESSHAVAYALKLAPKMKEDEGLVICLSGRGDKDVESIKRYMEEV.

Lys91 carries the post-translational modification N6-(pyridoxal phosphate)lysine.

The protein belongs to the TrpB family. As to quaternary structure, tetramer of two alpha and two beta chains. Requires pyridoxal 5'-phosphate as cofactor.

It catalyses the reaction (1S,2R)-1-C-(indol-3-yl)glycerol 3-phosphate + L-serine = D-glyceraldehyde 3-phosphate + L-tryptophan + H2O. The protein operates within amino-acid biosynthesis; L-tryptophan biosynthesis; L-tryptophan from chorismate: step 5/5. In terms of biological role, the beta subunit is responsible for the synthesis of L-tryptophan from indole and L-serine. This Bacillus cereus (strain ZK / E33L) protein is Tryptophan synthase beta chain.